The following is a 327-amino-acid chain: MAAPRSCALWSYCGRGWSWAMRGCQLLGLRSSWPGAPLSARLLPQEKRATETHFGSETVSEEEKGGKVYQVFESVAKKYDVMNDMMSLGIHRVWKDLLLWKMRPLPGTQLLDVAGGTGDIAFRFLNYVQSQHQRKQKRQLRAQQNLSWEEIAKEYQNEEDSLGGSRVVMCDINKEMLKVGKQKALAQGYRAGLAWVLGDAEELPFDDDKFDIYTIAFGIRNVTHIDQALQEAHRVLKPGGRFLCLEFSQVNNPLISRLYDLYSFQVIPVLGEVIAGDWKSYQYLVESIRRFPSQEEFKEMIEDAGFHKVTYESLTSGIVAIHSGFKL.

The transit peptide at 1–49 directs the protein to the mitochondrion; sequence MAAPRSCALWSYCGRGWSWAMRGCQLLGLRSSWPGAPLSARLLPQEKRA. S-adenosyl-L-methionine is bound by residues Thr-117, Asp-171, and 199–200; that span reads DA.

Belongs to the class I-like SAM-binding methyltransferase superfamily. MenG/UbiE family. Component of a multi-subunit COQ enzyme complex, composed of at least COQ3, COQ4, COQ5, COQ6, COQ7 and COQ9. Interacts with PYURF; the interaction is direct, stabilizes COQ5 protein and associates PYURF with COQ enzyme complex.

The protein localises to the mitochondrion inner membrane. It catalyses the reaction 2-methoxy-6-(all-trans-decaprenyl)benzene-1,4-diol + S-adenosyl-L-methionine = 5-methoxy-2-methyl-3-(all-trans-decaprenyl)benzene-1,4-diol + S-adenosyl-L-homocysteine + H(+). It participates in cofactor biosynthesis; ubiquinone biosynthesis. Methyltransferase required for the conversion of 2-decaprenyl-6-methoxy-1,4-benzoquinol (DDMQH2) to 2-decaprenyl-3-methyl-6-methoxy-1,4-benzoquinol (DMQH2). This chain is 2-methoxy-6-polyprenyl-1,4-benzoquinol methylase, mitochondrial, found in Pongo abelii (Sumatran orangutan).